Reading from the N-terminus, the 119-residue chain is U9-hexatoxin-Hi1 (119 aa).

Residues methionine 1–alanine 17 form the signal peptide. A propeptide spanning residues serine 18 to arginine 53 is cleaved from the precursor. 4 cysteine pairs are disulfide-bonded: cysteine 55–cysteine 73, cysteine 66–cysteine 79, cysteine 70–cysteine 117, and cysteine 72–cysteine 88.

The protein belongs to the neurotoxin 03 (Tx2) family. 03 subfamily. As to expression, expressed by the venom gland.

Its subcellular location is the secreted. In terms of biological role, probable ion channel inhibitor. The polypeptide is U9-hexatoxin-Hi1 (Hadronyche infensa (Fraser island funnel-web spider)).